The primary structure comprises 284 residues: MEIGLREWLIVIGIIVIAGILFDGWRRMRGGKGKLKFRLDRSLSNLPDDEGSAELLGPPRVLDTHKEPQLDEHDLPSVSMPAREPRESSSSKRGKRGGEPHQGDLNLDLDLDSGPSFSSRDDDFPVEESKSASHSDKDQPQAEEVLVISVICRDAAGFKGPALLQNILESGLRFGEMDIFHRHESMAGNGEVLFSMANAVKPGVFDLDDIDHFSTPAVSFFLGLPGPRHPKQAFDVMVAAARKLSQELNGELKDDQRSVLTAQTIEHYRQRIVEFERRALTQKR.

Residue M1 is a topological domain, periplasmic. The chain crosses the membrane as a helical span at residues 2–22 (EIGLREWLIVIGIIVIAGILF). Over 23 to 284 (DGWRRMRGGK…FERRALTQKR (262 aa)) the chain is Cytoplasmic. Positions 47-140 (PDDEGSAELL…SASHSDKDQP (94 aa)) are disordered. Basic and acidic residues-rich tracts occupy residues 62 to 75 (LDTH…EHDL), 83 to 102 (REPR…EPHQ), and 119 to 140 (SRDD…KDQP).

Belongs to the ZipA family. In terms of assembly, interacts with FtsZ via their C-terminal domains.

The protein resides in the cell inner membrane. In terms of biological role, essential cell division protein that stabilizes the FtsZ protofilaments by cross-linking them and that serves as a cytoplasmic membrane anchor for the Z ring. Also required for the recruitment to the septal ring of downstream cell division proteins. This is Cell division protein ZipA from Pseudomonas fluorescens (strain ATCC BAA-477 / NRRL B-23932 / Pf-5).